The sequence spans 549 residues: TBC1 domain family member 3 (549 aa).

The region spanning 101–293 is the Rab-GAP TBC domain; the sequence is GMPMNIRGPM…RLWDVYLVEG (193 aa). 2 S-palmitoyl cysteine lipidation sites follow: Cys-318 and Cys-325. Residues 350 to 419 are disordered; that stretch reads LTRKKGDLPP…PRSSTPCPGG (70 aa). Low complexity predominate over residues 398–417; it reads PRPIWSASPPRAPRSSTPCP.

Post-translationally, ubiquitinated by a CUL7-based E3 ligase, which leads to proteasomal degradation. In terms of processing, palmitoylation is required for membrane localization and protects TBC1D3 from ubiquitination. Expressed in liver, skeletal muscle, kidney, pancreas, spleen, testis, ovary, small intestine and peripheral blood leukocytes. Overexpressed in prostate cancers.

The protein resides in the cell membrane. In terms of biological role, acts as a GTPase activating protein for RAB5. Does not act on RAB4 or RAB11. This is TBC1 domain family member 3 (TBC1D3) from Homo sapiens (Human).